Here is a 268-residue protein sequence, read N- to C-terminus: Receptor expression-enhancing protein 2 (268 aa).

2 helical membrane passes run 1–21 (MVSWIISRMVVLAFGTLYPAY) and 35–55 (YVKWMMYWIVFALFTTAETIT). Residues 170–268 (GDDTHTAATL…TTANNVAESP (99 aa)) are disordered. Residues 180–196 (PRAKTATRTVRATPVPA) show a composition bias toward low complexity. Residues 199–216 (ESQHSSRSDDQSDSRTEH) are compositionally biased toward basic and acidic residues. Positions 228 to 248 (RIAITRAAKKPAAAKTEQTTK) are enriched in low complexity. Residues 249–258 (TVKKAPKKKP) are compositionally biased toward basic residues.

The protein belongs to the DP1 family. In terms of assembly, interacts with odorant receptor proteins.

It is found in the membrane. In terms of biological role, may enhance the cell surface expression of odorant receptors. The chain is Receptor expression-enhancing protein 2 (reep2) from Danio rerio (Zebrafish).